The chain runs to 78 residues: Delta-conotoxin TxVIA (78 aa).

Residues Met-1–Ala-22 form the signal peptide. Positions Asp-23 to Asn-49 are excised as a propeptide. Intrachain disulfides connect Cys-53-Cys-68, Cys-60-Cys-72, and Cys-67-Cys-77. Met-59 carries the methionine sulfoxide; partial modification.

This sequence belongs to the conotoxin O1 superfamily. In terms of tissue distribution, expressed by the venom duct. Is present in all duct parts with a highest content in part 4 (distal part near the pharynx).

It localises to the secreted. Delta-conotoxins bind to site 6 of voltage-gated sodium channels (Nav) and inhibit the inactivation process. Binding of this toxin is strongly calcium-dependent but not voltage-dependent. The binding site is most likely on the extracellular side of the sodium channel. Binds receptor sites on both mollusk and rat central nervous system, but despite its high affinity binding to rat sodium channel, it has no functional effect in vivo and in vitro on it. Also has no effect on Gambusia fish. Is important in mollusk for the paralysis of the prey. Upon injection of the peptide, a subordinate lobster assumes an exaggerated dominant posture (of a 'King-Kong' lobster!). This is Delta-conotoxin TxVIA from Conus textile (Cloth-of-gold cone).